The primary structure comprises 91 residues: Late embryogenesis abundant protein EMB564 (91 aa).

Composition is skewed to basic and acidic residues over residues 1-19 (MASG…REGE) and 32-51 (EAQE…RREQ). A disordered region spans residues 1–91 (MASGQESRKE…VTIDESKFTK (91 aa)).

The protein belongs to the small hydrophilic plant seed protein family.

Its function is as follows. LEA proteins are late embryonic proteins abundant in higher plant seed embryos. They may play an essential role in seed survival and in controlling water exchanges during seed desiccation and imbibition. This chain is Late embryogenesis abundant protein EMB564, found in Zea mays (Maize).